We begin with the raw amino-acid sequence, 394 residues long: MKATIFFLLLTVLAHSRSQYHYQGLMNYLENRMLAMEERIALWHEQNNRYNSDLKEFRQQAADLLEKLSKDHSKLRSDLEGAGARVDRVEREMDYIETKNPPKPCVKAADKMVEQDAVIKEKKKEEFFELSVCVNIISSLKAMKILKRLGSPKGLWTKDARSAKIYVFNGTSDNTLYEFSSMRELSSSSGVSKGKQITVPTAWNGTGHAVYDGFLYYISESSELQVVKYDLTNSSVADTAVLPMEERSPVYQLNPETLVDLVADEDGLWALYPAGDTINLAKMDSNSLDIEQMWDTACPRSNAEAAFIVCGTVYVVYNTKPPSRSRVQCVFDVNDMVSNGEAPLIYFPRRYGAHSSLKYNPEERQLYAWDDGYQILYKLELKKKLWAVMPPPEE.

Residues 1–18 form the signal peptide; that stretch reads MKATIFFLLLTVLAHSRS. A coiled-coil region spans residues 29 to 94; the sequence is LENRMLAMEE…RVDRVEREMD (66 aa). In terms of domain architecture, Olfactomedin-like spans 132 to 383; the sequence is VCVNIISSLK…QILYKLELKK (252 aa). The cysteines at positions 133 and 310 are disulfide-linked. Residues asparagine 169, asparagine 204, and asparagine 233 are each glycosylated (N-linked (GlcNAc...) asparagine).

The protein belongs to the OLFML3 family.

Its subcellular location is the secreted. Its function is as follows. Secreted scaffold protein that plays an essential role in dorsoventral patterning during early development. Stabilizes axial formation by restricting chordin (CHRD) activity on the dorsal side. Acts by facilitating the association between the tolloid proteases and their substrate chordin (CHRD), leading to enhance chordin (CHRD) degradation. This is Olfactomedin-like protein 3B (olfml3b) from Danio rerio (Zebrafish).